The primary structure comprises 185 residues: dTTP/UTP pyrophosphatase (185 aa).

D64 (proton acceptor) is an active-site residue.

Belongs to the Maf family. YhdE subfamily. A divalent metal cation is required as a cofactor.

The protein localises to the cytoplasm. It catalyses the reaction dTTP + H2O = dTMP + diphosphate + H(+). The enzyme catalyses UTP + H2O = UMP + diphosphate + H(+). Its function is as follows. Nucleoside triphosphate pyrophosphatase that hydrolyzes dTTP and UTP. May have a dual role in cell division arrest and in preventing the incorporation of modified nucleotides into cellular nucleic acids. The polypeptide is dTTP/UTP pyrophosphatase (Leptospira borgpetersenii serovar Hardjo-bovis (strain JB197)).